The chain runs to 400 residues: Diphosphomevalonate decarboxylase (400 aa).

Residues 25–28, arginine 80, 155–160, and threonine 211 contribute to the (R)-5-diphosphomevalonate site; these read YWGK and SGSACR.

The protein belongs to the diphosphomevalonate decarboxylase family. As to quaternary structure, homodimer.

The protein localises to the cytoplasm. It catalyses the reaction (R)-5-diphosphomevalonate + ATP = isopentenyl diphosphate + ADP + phosphate + CO2. Its pathway is steroid biosynthesis; cholesterol biosynthesis. Its function is as follows. Catalyzes the ATP dependent decarboxylation of (R)-5-diphosphomevalonate to form isopentenyl diphosphate (IPP). Functions in the mevalonate (MVA) pathway leading to isopentenyl diphosphate (IPP), a key precursor for the biosynthesis of isoprenoids and sterol synthesis. The chain is Diphosphomevalonate decarboxylase (mvd) from Danio rerio (Zebrafish).